The following is a 674-amino-acid chain: F420-dependent formate dehydrogenase 1 subunit alpha (674 aa).

The 4Fe-4S Mo/W bis-MGD-type domain maps to 3–59; that stretch reads LDFIHTICPYCGTGCGVDLVVKDGTLVGTNPFKRHPVNEGKTCIKGSYCHEFVHRDD. [4Fe-4S] cluster is bound by residues C10, C13, C17, and C45. Position 132 (U132) is a non-standard amino acid, selenocysteine.

The protein belongs to the prokaryotic molybdopterin-containing oxidoreductase family. In terms of assembly, dimer of an alpha (FdhA1) and a beta (FdhB1) subunit. It depends on [4Fe-4S] cluster as a cofactor. Mo-bis(molybdopterin guanine dinucleotide) is required as a cofactor. Zn(2+) serves as cofactor.

The catalysed reaction is oxidized coenzyme F420-(gamma-L-Glu)(n) + formate + 2 H(+) = reduced coenzyme F420-(gamma-L-Glu)(n) + CO2. Catalyzes the oxidation of formate to carbon dioxide, with coenzyme F420 as the electron acceptor. In vitro can also use methyl viologen as electron acceptor. The chain is F420-dependent formate dehydrogenase 1 subunit alpha from Methanococcus maripaludis (strain DSM 14266 / JCM 13030 / NBRC 101832 / S2 / LL).